A 230-amino-acid polypeptide reads, in one-letter code: Protein FAM3A (230 aa).

The N-terminal stretch at 1–33 (MRLAGPLRIVALVVSVGLTWIVVSILLGGPGSG) is a signal peptide. 2 cysteine pairs are disulfide-bonded: Cys59–Cys87 and Cys65–Cys222. The GG-type lectin domain maps to 68–226 (EHLAFRVVSG…LEMEGCIPRR (159 aa)).

This sequence belongs to the FAM3 family.

Its subcellular location is the secreted. This chain is Protein FAM3A (FAM3A), found in Pongo abelii (Sumatran orangutan).